A 359-amino-acid polypeptide reads, in one-letter code: Histidinol-phosphate aminotransferase (359 aa).

At Lys212 the chain carries N6-(pyridoxal phosphate)lysine.

It belongs to the class-II pyridoxal-phosphate-dependent aminotransferase family. Histidinol-phosphate aminotransferase subfamily. As to quaternary structure, homodimer. Requires pyridoxal 5'-phosphate as cofactor.

It catalyses the reaction L-histidinol phosphate + 2-oxoglutarate = 3-(imidazol-4-yl)-2-oxopropyl phosphate + L-glutamate. It participates in amino-acid biosynthesis; L-histidine biosynthesis; L-histidine from 5-phospho-alpha-D-ribose 1-diphosphate: step 7/9. This chain is Histidinol-phosphate aminotransferase, found in Buchnera aphidicola subsp. Schlechtendalia chinensis.